We begin with the raw amino-acid sequence, 565 residues long: Wee1-like protein kinase 2 (565 aa).

Disordered regions lie at residues 18 to 78 (YCEE…KSPE) and 169 to 191 (KSNG…GNVE). The segment covering 19–29 (CEEESESEGQE) has biased composition (acidic residues). The segment covering 31-51 (WETRDAHSQIPDRAEGQESEA) has biased composition (basic and acidic residues). Serine 76 bears the Phosphoserine mark. The short motif at 173–175 (KRK) is the Nuclear localization signal element. Residues 214–492 (FLEVEKIGVG…ARSRVLRPSL (279 aa)) enclose the Protein kinase domain. ATP is bound by residues 220–228 (IGVGEFGTV) and lysine 243. The Nuclear export signal signature appears at 317-331 (KLKDILLQISLGLKY). Aspartate 341 functions as the Proton acceptor in the catalytic mechanism. Positions 346 and 382 each coordinate Mg(2+). Residues 495-521 (AEELQQQLNLEKFKTATLERELREAQQ) are a coiled coil. The segment at 521-565 (QAWFSQEERGDAGVSGTPTGSRSTKRLVGGKSAKSSSFTWGKSSP) is disordered. Positions 553–565 (AKSSSFTWGKSSP) are enriched in polar residues.

Belongs to the protein kinase superfamily. Ser/Thr protein kinase family. WEE1 subfamily. Post-translationally, phosphorylation leads to increase its activity.

It localises to the nucleus. It catalyses the reaction L-tyrosyl-[protein] + ATP = O-phospho-L-tyrosyl-[protein] + ADP + H(+). Its function is as follows. Oocyte-specific protein tyrosine kinase that phosphorylates and inhibits CDK1 and acts as a key regulator of meiosis during both prophase I and metaphase II. Required to maintain meiotic arrest in oocytes during the germinal vesicle (GV) stage, a long period of quiescence at dictyate prophase I, by phosphorylating CDK1 at 'Tyr-15', leading to inhibit CDK1 activity and prevent meiotic reentry. Also required for metaphase II exit during egg activation by phosphorylating CDK1 at 'Tyr-15', to ensure exit from meiosis in oocytes and promote pronuclear formation. This chain is Wee1-like protein kinase 2 (WEE2), found in Ailuropoda melanoleuca (Giant panda).